We begin with the raw amino-acid sequence, 384 residues long: MTQRNAIVVGGGIGGLTAASALARQGWRVQLHERQPEIRAVGAGIYIWDNGLFALDAVHAYSEAIEGAHEPPSIDMRGQSGKTLMRIKINGESQPRCLTLLRDQLIKALVNAAKDAGVELVTNSSVVAVRPEGEVHFEHGDHSTTDLVVVADGVHSRLRDSVDLSYSRIRMSQGAARIMIPQSSHELPAEDRGRILESFHGSRRLLYTPCTPELVYLAFTCDSDDPAISGAYINTSEWSRSFPTLSDALRATEGVPATRWDTFEYVRLASWSRGKVAFLGDAAHAQPPYLGQGGGTAMTNAIALANAVSSDMELSEALATWERITRPGIESTQRTSYQQRLLNYVPDRVRNPLVRIAGLTSNVAKSQLKATEIRPTLGSTGGSR.

The protein belongs to the 3-hydroxybenzoate 6-hydroxylase family.

The catalysed reaction is 2-heptyl-4(1H)-quinolone + NADH + O2 + H(+) = 2-heptyl-3-hydroxy-4(1H)-quinolone + NAD(+) + H2O. Functionally, involved in the degradation of the Pseudomonas aeruginosa quorum sensing signal molecule HHQ (2-heptyl-4-quinolone) to anthranilic acid. Probably catalyzes the hydroxylation of HHQ to PQS (2-heptyl-3-hydroxy-4-quinolone). This Rhodococcus erythropolis (Arthrobacter picolinophilus) protein is Probable 2-heptyl-3-hydroxy-4(1H)-quinolone synthase AqdB2.